Reading from the N-terminus, the 204-residue chain is MKLLHIDSSILGDHSVSRQLTAAIIARLQEVTPDLDVSHRDLAANPLSHLSGALLAASAPGAPAPDPSTQAALGESAAILAEFLAADIVVVGAPMYNFAISSQLKAWIDRLVIAGKTFRYADGAVEGLAGGRRLIIASSRGGVFEAGAAAAALDYQETYLRAIFGFIGIADVEIIRAEGLAFGEDARALAIKQAGDAILRLEAA.

FMN-binding positions include serine 9, 15 to 17 (SVS), 95 to 98 (MYNF), and 139 to 142 (SRGG).

Belongs to the azoreductase type 1 family. Homodimer. It depends on FMN as a cofactor.

It catalyses the reaction 2 a quinone + NADH + H(+) = 2 a 1,4-benzosemiquinone + NAD(+). The enzyme catalyses N,N-dimethyl-1,4-phenylenediamine + anthranilate + 2 NAD(+) = 2-(4-dimethylaminophenyl)diazenylbenzoate + 2 NADH + 2 H(+). Quinone reductase that provides resistance to thiol-specific stress caused by electrophilic quinones. In terms of biological role, also exhibits azoreductase activity. Catalyzes the reductive cleavage of the azo bond in aromatic azo compounds to the corresponding amines. The sequence is that of FMN-dependent NADH:quinone oxidoreductase from Methylocella silvestris (strain DSM 15510 / CIP 108128 / LMG 27833 / NCIMB 13906 / BL2).